A 228-amino-acid polypeptide reads, in one-letter code: NAD(P)H-hydrate epimerase (228 aa).

The YjeF N-terminal domain maps to 9–214 (AQNIDQELFN…DLLLKKYELE (206 aa)). 60–64 (NNGGD) lines the (6S)-NADPHX pocket. The K(+) site is built by Asn61 and Asp125. (6S)-NADPHX is bound by residues 129 to 135 (GFSFKGE) and Asp158. Residue Ser161 participates in K(+) binding.

This sequence belongs to the NnrE/AIBP family. K(+) serves as cofactor.

It catalyses the reaction (6R)-NADHX = (6S)-NADHX. The catalysed reaction is (6R)-NADPHX = (6S)-NADPHX. Its function is as follows. Catalyzes the epimerization of the S- and R-forms of NAD(P)HX, a damaged form of NAD(P)H that is a result of enzymatic or heat-dependent hydration. This is a prerequisite for the S-specific NAD(P)H-hydrate dehydratase to allow the repair of both epimers of NAD(P)HX. The sequence is that of NAD(P)H-hydrate epimerase from Nematostella vectensis (Starlet sea anemone).